A 310-amino-acid polypeptide reads, in one-letter code: HTH-type transcriptional activator TtdR (310 aa).

In terms of domain architecture, HTH lysR-type spans 6-63 (PLAKDLQVLVEIVHSGSFSAAAATLGQTPAFVTKRIQILENTLATTLLNRSARGVALT). Residues 23 to 42 (FSAAAATLGQTPAFVTKRIQ) constitute a DNA-binding region (H-T-H motif).

Belongs to the LysR transcriptional regulatory family.

Its function is as follows. Positive regulator required for L-tartrate-dependent anaerobic growth on glycerol. Induces expression of the ttdA-ttdB-ygjE operon. The protein is HTH-type transcriptional activator TtdR (ttdR) of Escherichia coli O6:K15:H31 (strain 536 / UPEC).